We begin with the raw amino-acid sequence, 274 residues long: Bis(5'-nucleosyl)-tetraphosphatase, symmetrical (274 aa).

Belongs to the Ap4A hydrolase family.

The catalysed reaction is P(1),P(4)-bis(5'-adenosyl) tetraphosphate + H2O = 2 ADP + 2 H(+). Functionally, hydrolyzes diadenosine 5',5'''-P1,P4-tetraphosphate to yield ADP. This Shewanella baltica (strain OS155 / ATCC BAA-1091) protein is Bis(5'-nucleosyl)-tetraphosphatase, symmetrical.